A 371-amino-acid chain; its full sequence is DNA replication and repair protein RecF (371 aa).

Residue Gly30–Thr37 coordinates ATP.

Belongs to the RecF family.

The protein resides in the cytoplasm. The RecF protein is involved in DNA metabolism; it is required for DNA replication and normal SOS inducibility. RecF binds preferentially to single-stranded, linear DNA. It also seems to bind ATP. The sequence is that of DNA replication and repair protein RecF from Lacticaseibacillus casei (strain BL23) (Lactobacillus casei).